Here is an 81-residue protein sequence, read N- to C-terminus: Translational regulator CsrA (81 aa).

It belongs to the CsrA/RsmA family. In terms of assembly, homodimer; the beta-strands of each monomer intercalate to form a hydrophobic core, while the alpha-helices form wings that extend away from the core.

The protein localises to the cytoplasm. Its function is as follows. A translational regulator that binds mRNA to regulate translation initiation and/or mRNA stability. Usually binds in the 5'-UTR at or near the Shine-Dalgarno sequence preventing ribosome-binding, thus repressing translation. Its main target seems to be the major flagellin gene, while its function is anatagonized by FliW. The polypeptide is Translational regulator CsrA (Desulforapulum autotrophicum (strain ATCC 43914 / DSM 3382 / VKM B-1955 / HRM2) (Desulfobacterium autotrophicum)).